Consider the following 344-residue polypeptide: tRNA-specific 2-thiouridylase MnmA (344 aa).

ATP is bound by residues 9-16 and Met-34; that span reads AMSGGVDS. The Nucleophile role is filled by Cys-92. Cys-92 and Cys-188 are oxidised to a cystine. Gly-116 is an ATP binding site. Positions 138–140 are interaction with tRNA; it reads KDQ. Cys-188 serves as the catalytic Cysteine persulfide intermediate.

The protein belongs to the MnmA/TRMU family.

The protein localises to the cytoplasm. It catalyses the reaction S-sulfanyl-L-cysteinyl-[protein] + uridine(34) in tRNA + AH2 + ATP = 2-thiouridine(34) in tRNA + L-cysteinyl-[protein] + A + AMP + diphosphate + H(+). Its function is as follows. Catalyzes the 2-thiolation of uridine at the wobble position (U34) of tRNA, leading to the formation of s(2)U34. The chain is tRNA-specific 2-thiouridylase MnmA from Desulfotalea psychrophila (strain LSv54 / DSM 12343).